The chain runs to 706 residues: Probable N(6)-adenosine-methyltransferase MT-A70-like (706 aa).

Disordered stretches follow at residues 64–114 (RPFV…VAAA) and 223–261 (TLPL…PDMW). Residues 103-114 (SPGSSPASVAAA) show a composition bias toward low complexity. Residues 227 to 236 (LQPPPAPQMP) are compositionally biased toward pro residues. S-adenosyl-L-methionine is bound by residues 479–480 (DI) and Asp-497. A positively charged region required for RNA-binding region spans residues 567–580 (RIIRTGRTGHWLNH). S-adenosyl-L-methionine-binding positions include Lys-614, 637–640 (RMHN), and 650–651 (NQ). The disordered stretch occupies residues 669-706 (AYPDSEVQPPSPPRASAPIDGDQGTSQKPTVSDGERPA).

It belongs to the MT-A70-like family.

It is found in the nucleus. The catalysed reaction is an adenosine in mRNA + S-adenosyl-L-methionine = an N(6)-methyladenosine in mRNA + S-adenosyl-L-homocysteine + H(+). Its function is as follows. Probable N6-methyltransferase that methylates adenosine residues of some mRNAs. N6-methyladenosine (m6A), which is present at internal sites of some mRNAs, may play a role in the efficiency of mRNA splicing, transport or translation. The protein is Probable N(6)-adenosine-methyltransferase MT-A70-like of Oryza sativa subsp. japonica (Rice).